Consider the following 259-residue polypeptide: Ras-related protein Rab-34 (259 aa).

Met-1 bears the N-acetylmethionine mark. GTP is bound by residues Ser-62, Val-63, Gly-64, Lys-65, Thr-66, Asp-78, Tyr-81, and Thr-84. Position 66 (Thr-66) interacts with Mg(2+). The short motif at 71-89 is the Switch 1 element; it reads RFCKDTFDKNYKATIGVDF. Mg(2+)-binding residues include Thr-84 and Asp-107. The Switch 2 motif lies at 108-127; sequence TAGQERFKCIASTYYRGAQA. The GTP site is built by Gly-110, Lys-167, Asp-169, and Ser-198. Ser-241 carries the phosphoserine modification. 2 S-geranylgeranyl cysteine lipidation sites follow: Cys-257 and Cys-258.

This sequence belongs to the small GTPase superfamily. Rab family. Interacts with RILP. The GTP-bound form interacts with REP15. Mg(2+) is required as a cofactor.

Its subcellular location is the cytoplasm. It localises to the golgi apparatus. The protein resides in the cytoplasmic vesicle. It is found in the phagosome. The protein localises to the phagosome membrane. Its subcellular location is the cell projection. It localises to the cilium. The protein resides in the cytoskeleton. It is found in the microtubule organizing center. The protein localises to the centrosome. Its subcellular location is the centriole. It catalyses the reaction GTP + H2O = GDP + phosphate + H(+). Regulated by guanine nucleotide exchange factors (GEFs) which promote the exchange of bound GDP for free GTP. Regulated by GTPase activating proteins (GAPs) which increase the GTP hydrolysis activity. Inhibited by GDP dissociation inhibitors (GDIs). Functionally, the small GTPases Rab are key regulators of intracellular membrane trafficking, from the formation of transport vesicles to their fusion with membranes. Rabs cycle between an inactive GDP-bound form and an active GTP-bound form that is able to recruit to membranes different sets of downstream effectors directly responsible for vesicle formation, movement, tethering and fusion. RAB34 transports protein involved in the redistribution of lysosomes to the peri-Golgi region. Plays a role in the maturation of phagosomes that engulf pathogens, such as S.aureus and M.tuberculosis. Plays a role in the fusion of phagosomes with lysosomes. Required for the early steps of intracellular ciliogenesis, the cilium assembly pathway initiated by trafficking and docking of ciliary vesicles to the centrioles in the cytoplasm, followed by axoneme formation in the cytoplasm. After axoneme elongation, the centrioles migrate close to the cell surface so that ciliary vesicles can fuse with the plasma membrane to expose cilia to the extracellular space. It seems dispensable for ciliogenesis via the extracellular pathway where cilium assembly begins after migration and docking of the centriole to the plasma membrane. Also acts as a positive regulator of hedgehog signaling and regulates ciliary function. In Mus musculus (Mouse), this protein is Ras-related protein Rab-34.